Here is a 170-residue protein sequence, read N- to C-terminus: Putative 3-methyladenine DNA glycosylase (170 aa).

It belongs to the DNA glycosylase MPG family.

This Sodalis glossinidius protein is Putative 3-methyladenine DNA glycosylase.